A 439-amino-acid chain; its full sequence is Paraneoplastic antigen-like protein 8A (439 aa).

Residues 208–439 form a disordered region; that stretch reads SALKAETPNN…RRATNESRKV (232 aa). The segment covering 231-249 has biased composition (basic residues); that stretch reads LVRRAGAKSRSRRKKQKKN. Composition is skewed to basic and acidic residues over residues 314 to 326, 395 to 404, and 423 to 439; these read GPRE…RAEA, SRREASDQKA, and AKPE…SRKV.

Belongs to the PNMA family.

The chain is Paraneoplastic antigen-like protein 8A from Homo sapiens (Human).